We begin with the raw amino-acid sequence, 385 residues long: MPANNSLLIFRDEINNIDKKIVKLLAERKNLVFKIAQSKIENNQAIRDIEREKKMLQKLIFLGKKYNLKSEYITQLFQLIIEESVATQKKLLKKFCNHNKLIPANFSFLGPKGSYSHIAAYKYADLNFQKCITNECSTFEEVVLSVENNQSDYAVLPIENTCSGSINEVFDILKKTNLFIIGEINIFINHNLLTLKKIELNKIKTIYSHPQPFQQCSDFIKKFPEWKIKYTKSTADAMKKIKKYNDVTNAALGSEIGSKIYGLEILMKNLANKENNITRFILLNRNPKKISKNIPTTTTLIFTTGQEAGSLSKVLSILQEKKLIMKKLTSQKIYKNPWEEMFYIDIQVNLSSTLMQDALEKIKKITRFIKILGCYPSEKITPIAP.

The Chorismate mutase domain occupies 1–92; sequence MPANNSLLIF…ESVATQKKLL (92 aa). Substrate-binding residues include Arg-11, Arg-28, Lys-39, Asp-48, Glu-52, Ser-84, and Gln-88. The region spanning 105–285 is the Prephenate dehydratase domain; sequence NFSFLGPKGS…NITRFILLNR (181 aa). The regulatory stretch occupies residues 286–385; that stretch reads NPKKISKNIP…PSEKITPIAP (100 aa). One can recognise an ACT domain in the interval 299–376; that stretch reads TLIFTTGQEA…RFIKILGCYP (78 aa).

The protein localises to the cytoplasm. The enzyme catalyses chorismate = prephenate. It carries out the reaction prephenate + H(+) = 3-phenylpyruvate + CO2 + H2O. The protein operates within amino-acid biosynthesis; L-phenylalanine biosynthesis; phenylpyruvate from prephenate: step 1/1. It participates in metabolic intermediate biosynthesis; prephenate biosynthesis; prephenate from chorismate: step 1/1. Catalyzes the Claisen rearrangement of chorismate to prephenate and the decarboxylation/dehydration of prephenate to phenylpyruvate. This is Bifunctional chorismate mutase/prephenate dehydratase (pheA) from Buchnera aphidicola subsp. Acyrthosiphon pisum (strain APS) (Acyrthosiphon pisum symbiotic bacterium).